The primary structure comprises 244 residues: Small ribosomal subunit protein uS3 (244 aa).

Residues valine 39–arginine 107 form the KH type-2 domain. Positions valine 213–arginine 244 are disordered. The span at glutamate 216 to arginine 244 shows a compositional bias: basic and acidic residues.

The protein belongs to the universal ribosomal protein uS3 family. As to quaternary structure, part of the 30S ribosomal subunit. Forms a tight complex with proteins S10 and S14.

Binds the lower part of the 30S subunit head. Binds mRNA in the 70S ribosome, positioning it for translation. The polypeptide is Small ribosomal subunit protein uS3 (Xanthomonas campestris pv. campestris (strain 8004)).